The following is a 169-amino-acid chain: Putative phosphoesterase SSP1770 (169 aa).

Residue His-34 is the Proton donor of the active site. 2 short sequence motifs (HXTX) span residues 34–37 (HITI) and 115–118 (HFTI). The active-site Proton acceptor is His-115.

This sequence belongs to the 2H phosphoesterase superfamily. YjcG family.

The polypeptide is Putative phosphoesterase SSP1770 (Staphylococcus saprophyticus subsp. saprophyticus (strain ATCC 15305 / DSM 20229 / NCIMB 8711 / NCTC 7292 / S-41)).